Consider the following 101-residue polypeptide: Protein translation factor SUI1 homolog (101 aa).

This sequence belongs to the SUI1 family.

This chain is Protein translation factor SUI1 homolog, found in Methanosphaera stadtmanae (strain ATCC 43021 / DSM 3091 / JCM 11832 / MCB-3).